Consider the following 108-residue polypeptide: Parvalbumin beta (108 aa).

Ala-1 carries the post-translational modification N-acetylalanine. The cysteines at positions 11 and 33 are disulfide-linked. EF-hand domains are found at residues 38–73 (KSAD…FKAG) and 77–108 (LTDA…LVKA). Ca(2+) is bound by residues Asp-51, Asp-53, Ser-55, Phe-57, Glu-59, Glu-62, Asp-90, Asp-92, Asp-94, Ala-96, and Glu-101.

It belongs to the parvalbumin family.

In terms of biological role, in muscle, parvalbumin is thought to be involved in relaxation after contraction. It binds two calcium ions. In Merlangius merlangus (Whiting), this protein is Parvalbumin beta.